The chain runs to 313 residues: tRNA-cytidine(32) 2-sulfurtransferase (313 aa).

A PP-loop motif motif is present at residues 47–52; sequence SGGKDS. Residues cysteine 122, cysteine 125, and cysteine 213 each coordinate [4Fe-4S] cluster. Residues 288-313 form a disordered region; sequence PVGWQPEDDEDTEKRPPVRLDVLEIK. Residues 299–313 show a composition bias toward basic and acidic residues; the sequence is TEKRPPVRLDVLEIK.

This sequence belongs to the TtcA family. Homodimer. It depends on Mg(2+) as a cofactor. [4Fe-4S] cluster is required as a cofactor.

The protein localises to the cytoplasm. It catalyses the reaction cytidine(32) in tRNA + S-sulfanyl-L-cysteinyl-[cysteine desulfurase] + AH2 + ATP = 2-thiocytidine(32) in tRNA + L-cysteinyl-[cysteine desulfurase] + A + AMP + diphosphate + H(+). It participates in tRNA modification. Catalyzes the ATP-dependent 2-thiolation of cytidine in position 32 of tRNA, to form 2-thiocytidine (s(2)C32). The sulfur atoms are provided by the cysteine/cysteine desulfurase (IscS) system. The sequence is that of tRNA-cytidine(32) 2-sulfurtransferase from Yersinia pseudotuberculosis serotype O:1b (strain IP 31758).